A 390-amino-acid polypeptide reads, in one-letter code: Endoglucanase gh5-1 (390 aa).

The first 16 residues, 1-16 (MKATILASTFAAGALA), serve as a signal peptide directing secretion. One can recognise a CBM1 domain in the interval 17–52 (QSGAWGQCGGNGWSGATSCISGYACNYVNDWYSQCQ). 2 N-linked (GlcNAc...) asparagine glycosylation sites follow: N157 and N261.

It belongs to the glycosyl hydrolase 5 (cellulase A) family. N-glycosylated.

It is found in the secreted. The catalysed reaction is Endohydrolysis of (1-&gt;4)-beta-D-glucosidic linkages in cellulose, lichenin and cereal beta-D-glucans.. Its function is as follows. Endoglucanase that plays an important role in biomass degradation. Binds onto plant cell walls to participate in the hydrolysis of cellulose. The protein is Endoglucanase gh5-1 of Neurospora crassa (strain ATCC 24698 / 74-OR23-1A / CBS 708.71 / DSM 1257 / FGSC 987).